The chain runs to 555 residues: Developmental and secondary metabolism regulator veA (555 aa).

Disordered regions lie at residues 1 to 23 (MATRPPLSPPVNETEHSVSRITR), 39 to 60 (ERARACGAGAKSSADRRPVDPP), and 234 to 533 (RRRG…TLLS). Residues 13–23 (ETEHSVSRITR) are compositionally biased toward basic and acidic residues. The Velvet domain occupies 25-228 (GKRITYKLNV…AEQGCRVRIR (204 aa)). The Nuclear localization signal signature appears at 39-44 (ERARAC). Residues 239–258 (KRSDDYDFDEERSHRGRIPD) show a composition bias toward basic and acidic residues. Over residues 311 to 331 (AIPPAPAPAPPSSSTPTPVAP) the composition is skewed to pro residues. Composition is skewed to polar residues over residues 336 to 372 (RSSSYTSHLSFGATRTQYPAPQLPGTPQSATTPTQVY) and 380 to 389 (HARNPSTSTE). The PEST stretch occupies residues 439-479 (QTPSNAAPSLPPIASISAEYSNNLPQPPSNLAPSPNREPRG). 2 stretches are compositionally biased toward basic and acidic residues: residues 492–503 (RPHEDAFSHSER) and 519–533 (ADRRPSDVHRATLLS).

It belongs to the velvet family. VeA subfamily. Component of the heterotrimeric velvet complex composed of laeA, veA and velB; VeA acting as a bridging protein between laeA and velB.

It is found in the nucleus. Its subcellular location is the cytoplasm. Component of the velvet transcription factor complex that controls sexual/asexual developmental ratio in response to light, promoting sexual development in the darkness while stimulating asexual sporulation under illumination. The velvet complex hat acts as a global regulator for secondary metabolite gene expression. Increases spore dispersing capacity by impacting conidiophore architecture. In Aspergillus niger (strain ATCC 1015 / CBS 113.46 / FGSC A1144 / LSHB Ac4 / NCTC 3858a / NRRL 328 / USDA 3528.7), this protein is Developmental and secondary metabolism regulator veA.